The following is a 414-amino-acid chain: Histidine--tRNA ligase (414 aa).

This sequence belongs to the class-II aminoacyl-tRNA synthetase family. Homodimer.

The protein resides in the cytoplasm. The enzyme catalyses tRNA(His) + L-histidine + ATP = L-histidyl-tRNA(His) + AMP + diphosphate + H(+). This chain is Histidine--tRNA ligase, found in Rickettsia africae (strain ESF-5).